The chain runs to 543 residues: Hydroxylamine reductase (543 aa).

Positions 5, 8, 17, and 23 each coordinate [4Fe-4S] cluster. His-236, Glu-260, Cys-304, Cys-398, Cys-426, Cys-451, Glu-486, and Lys-488 together coordinate hybrid [4Fe-2O-2S] cluster. Cys-398 carries the cysteine persulfide modification.

The protein belongs to the HCP family. [4Fe-4S] cluster serves as cofactor. It depends on hybrid [4Fe-2O-2S] cluster as a cofactor.

Its subcellular location is the cytoplasm. It carries out the reaction A + NH4(+) + H2O = hydroxylamine + AH2 + H(+). Catalyzes the reduction of hydroxylamine to form NH(3) and H(2)O. The protein is Hydroxylamine reductase of Bacteroides thetaiotaomicron (strain ATCC 29148 / DSM 2079 / JCM 5827 / CCUG 10774 / NCTC 10582 / VPI-5482 / E50).